We begin with the raw amino-acid sequence, 158 residues long: Curculin-2 (158 aa).

A signal peptide spans 1-22 (MAAKFLLTILVTFAAVASLGMA). The Bulb-type lectin domain occupies 23–131 (DSVLLSGQTL…VLWPLGLNGC (109 aa)). Cys51 and Cys74 are oxidised to a cystine. Asn103 carries an N-linked (GlcNAc...) asparagine glycan. Residues 136–158 (GEITVAKDSTEPQHEDIKMVINN) constitute a propeptide that is removed on maturation.

As to quaternary structure, heterodimer with curculin-1; Disulfide-linked.

Functionally, taste-modifying protein; sweet-tasting. After curculin, water elicits a sweet taste, and sour substances induce a stronger sense of sweetness. In Molineria latifolia (Lumbah), this protein is Curculin-2.